A 442-amino-acid chain; its full sequence is UDP-glycosyltransferase 78D4 (442 aa).

Residues Ala-322 to Gln-324, His-339 to Glu-347, and Phe-361 to His-364 contribute to the UDP-alpha-D-glucose site.

The protein belongs to the UDP-glycosyltransferase family.

The chain is UDP-glycosyltransferase 78D4 (UGT78D4) from Arabidopsis thaliana (Mouse-ear cress).